The sequence spans 71 residues: uncharacterized protein (71 aa).

Residues 44–66 (LFFLVFRRLFSWFLVLLPSPRFF) traverse the membrane as a helical segment.

It is found in the membrane. This is an uncharacterized protein from Saccharomyces cerevisiae (strain ATCC 204508 / S288c) (Baker's yeast).